A 197-amino-acid polypeptide reads, in one-letter code: Elongation factor Ts (197 aa).

The interval 81 to 84 is involved in Mg(2+) ion dislocation from EF-Tu; sequence TDFV.

Belongs to the EF-Ts family.

It localises to the cytoplasm. Associates with the EF-Tu.GDP complex and induces the exchange of GDP to GTP. It remains bound to the aminoacyl-tRNA.EF-Tu.GTP complex up to the GTP hydrolysis stage on the ribosome. The chain is Elongation factor Ts from Sulfurihydrogenibium sp. (strain YO3AOP1).